The sequence spans 89 residues: Small ribosomal subunit protein uS15 (89 aa).

The protein belongs to the universal ribosomal protein uS15 family. In terms of assembly, part of the 30S ribosomal subunit. Forms a bridge to the 50S subunit in the 70S ribosome, contacting the 23S rRNA.

One of the primary rRNA binding proteins, it binds directly to 16S rRNA where it helps nucleate assembly of the platform of the 30S subunit by binding and bridging several RNA helices of the 16S rRNA. Its function is as follows. Forms an intersubunit bridge (bridge B4) with the 23S rRNA of the 50S subunit in the ribosome. In Corynebacterium aurimucosum (strain ATCC 700975 / DSM 44827 / CIP 107346 / CN-1) (Corynebacterium nigricans), this protein is Small ribosomal subunit protein uS15.